The following is a 487-amino-acid chain: Cysteine--tRNA ligase (487 aa).

Position 29 (C29) interacts with Zn(2+). The short motif at 31 to 41 (VTVYDYNHVGH) is the 'HIGH' region element. Zn(2+) contacts are provided by C209, H234, and E238. Residues 266 to 270 (KMSKS) carry the 'KMSKS' region motif. K269 lines the ATP pocket.

This sequence belongs to the class-I aminoacyl-tRNA synthetase family. In terms of assembly, monomer. The cofactor is Zn(2+).

It localises to the cytoplasm. The enzyme catalyses tRNA(Cys) + L-cysteine + ATP = L-cysteinyl-tRNA(Cys) + AMP + diphosphate. In Sulfurihydrogenibium sp. (strain YO3AOP1), this protein is Cysteine--tRNA ligase.